The following is a 1594-amino-acid chain: MGTISSVLQWSCTKCNTINPTESLKCFNCGTVRKVFPQQQQQQHRSSSITASWTADDALEQEQAEKGQERDKEKGRAAVARSEYKHVYKSLLRGCLKRPQRNSQNLPANCVDCEDTRKYIKSSIELYRHFSNPALNRRWVCHACGTDNSSVTWHCLICDTVSYLAPIYKDAIAADRGQDLAGSLGNRGELLAADHSHPHHHHHYLHQELEEQHQHQLHSQHLHKRHLKGRSASGSGSGPGSGSGLRRTQSLSTAIDKSASGRSCHICYANNQSKDIFNLPQIKPAPQLTGIPPVAACSNSRFAIANDTFCRRKQNNNNKNQNHKVVRESGAKRKYNFTITTLSRSAAKDAGHGQMKPLRQVVNLNLNLQQEPQQKSPANPQQLQRKTQREPAAVSMNPTQFTIPRNGVFIAVNEWSEPMASSSSVSSSSNHHHHHHSNSNSNSSGNSNIINNNSSSSSGSNKLYENECVALAQQQLRAAAAQAAQAAATAVAIASSPSAKAMAEPAPTATMPIYAQVNKQHKLKKKQQIASESQTNNNTGSGEIADAVSESLTAGLGTSTDGSGEASESESQVEEHSIYAKVWKGPRKATESKIMHDPGSSSRLSGAASAAAGTASAGAIAAAVGAAAASRHDNKTQLGNGSRSKMWICIKCSYAYNRLWLQTCEMCEAKAEQQQQQLQLQQQQQQQQQHHHHHLQQQQAEAPRDEPWTCKKCTLVNYSTAMACVVCGGSKLKSISSIEDMTLRKGEFWTCSHCTLKNSLHSPVCSACKSHRQPQLSMAMEAVRERPDGQSYEEQDAAAVGGGGGSAHQSGANEVKAPTALNLPLTSVALPMPMLQLPTSTAAGLRGSRSPSPRMQLLPSLQQQRNSSSSGAIPKRHSTGGSIVPRNISIAGLANYNLQQGQGVGSASVVSASGAGSGAGAVGASTSTKKWQCPACTYDNCAASVVCDICSSPRGLASAVLGEALGRKSVRVALTPADIRQESKLMENLRQLEETEALTKWQNIIQYCRDNSELFVDDSFPPAPKSLYYNPASGAGEGNPVVQWRRPHEINCDGGAYPPWAVFRTPLPSDICQGVLGNCWLLSALAVLAEREDLVKEVLVTKEICGQGAYQVRLCKDGKWTTVLVDDLLPCDKRGHLVYSQAKRKQLWVPLIEKAVAKIHGCYEALVSGRAIEGLATLTGAPCESIPLQASSLPMPSEDELDKDLIWAQLLSSRCVRFLMGASCGGGNMKVDEEEYQQKGLRPRHAYSVLDVKDIQGHRLLKLRNPWGHYSWRGDWSDDSSLWTDDLRDALMPHGASEGVFWISFEDVLNYFDCIDICKVRSGWNEVRLQGTLQPLCSISCVLLTVLEPTEAEFTLFQEGQRNSEKSQRSQLDLCVVIFRTRSPAAPEIGRLVEHSKRQVRGFVGCHKMLERDIYLLVCLAFNHWHTGIEDPHQYPQCILAIHSSKRLLVEQISPSPHLLADAIISLTLTKGQRHEGREGMTAYYLTKGWAGLVVMVENRHENKWIHVKCDCQESYNVVSTRGELKTVDSVPPLQRQVIIVLTQLEGSGGFSIAHRLTHRLANSRGLHDWGPPGATHCPPIENVHGLHAPRLIT.

RanBP2-type zinc fingers lie at residues 1–35 (MGTI…VRKV) and 135–164 (LNRR…VSYL). Disordered stretches follow at residues 210 to 256 (EEQH…TAID), 371 to 400 (EPQQ…NPTQ), 420 to 459 (ASSS…SSSG), 524 to 543 (KKKQ…GSGE), and 554 to 606 (AGLG…RLSG). Basic residues predominate over residues 215 to 229 (HQLHSQHLHKRHLKG). Polar residues-rich tracts occupy residues 246-255 (RRTQSLSTAI) and 371-385 (EPQQ…QLQR). The residue at position 250 (Ser250) is a Phosphoserine. Over residues 438-459 (NSNSNSSGNSNIINNNSSSSSG) the composition is skewed to low complexity. Polar residues predominate over residues 528–541 (QIASESQTNNNTGS). The RanBP2-type 3 zinc finger occupies 643–673 (RSKMWICIKCSYAYNRLWLQTCEMCEAKAEQ). The tract at residues 684 to 703 (QQQQQQHHHHHLQQQQAEAP) is disordered. RanBP2-type zinc fingers lie at residues 704–733 (RDEP…SKLK) and 744–774 (RKGE…HRQP). Disordered stretches follow at residues 786–811 (RPDG…HQSG) and 860–884 (SLQQ…GSIV). Positions 860 to 871 (SLQQQRNSSSSG) are enriched in polar residues. The RanBP2-type 6 zinc-finger motif lies at 927-956 (STKKWQCPACTYDNCAASVVCDICSSPRGL). The 308-residue stretch at 1014-1321 (LFVDDSFPPA…FDCIDICKVR (308 aa)) folds into the Calpain catalytic domain. Residues Cys1079, His1245, and Asn1265 contribute to the active site.

This sequence belongs to the peptidase C2 family.

Its function is as follows. Has a role in eye development. Functionally, calcium-regulated non-lysosomal thiol-protease. The polypeptide is Calpain-D (sol) (Drosophila melanogaster (Fruit fly)).